The chain runs to 454 residues: UDP-N-acetylmuramoyl-tripeptide--D-alanyl-D-alanine ligase (454 aa).

ATP is bound at residue 116-122; that stretch reads GSVGKTT.

It belongs to the MurCDEF family. MurF subfamily.

It localises to the cytoplasm. It catalyses the reaction D-alanyl-D-alanine + UDP-N-acetyl-alpha-D-muramoyl-L-alanyl-gamma-D-glutamyl-meso-2,6-diaminopimelate + ATP = UDP-N-acetyl-alpha-D-muramoyl-L-alanyl-gamma-D-glutamyl-meso-2,6-diaminopimeloyl-D-alanyl-D-alanine + ADP + phosphate + H(+). It functions in the pathway cell wall biogenesis; peptidoglycan biosynthesis. Its function is as follows. Involved in cell wall formation. Catalyzes the final step in the synthesis of UDP-N-acetylmuramoyl-pentapeptide, the precursor of murein. This chain is UDP-N-acetylmuramoyl-tripeptide--D-alanyl-D-alanine ligase, found in Synechocystis sp. (strain ATCC 27184 / PCC 6803 / Kazusa).